A 1667-amino-acid chain; its full sequence is Myomesin-1 (1667 aa).

Phosphoserine occurs at positions 124 and 142. The segment covering 192–210 (SKQSTASKQSATSKRTTST) has biased composition (low complexity). Residues 192–217 (SKQSTASKQSATSKRTTSTLQREETF) are disordered. 2 Ig-like C2-type domains span residues 258–349 (PEFI…ASVV) and 376–478 (PYGY…AYVF). 3 consecutive Fibronectin type-III domains span residues 492–587 (APLD…ALDP), 620–714 (PPTD…VVGD), and 721–814 (APGK…VKAA). Residues 818–915 (GVSPDVWPQL…PKKKKDPVAV (98 aa)) form a disordered region. Phosphoserine occurs at positions 863 and 867. Over residues 885–894 (EPLSSPPQEA) the composition is skewed to low complexity. Fibronectin type-III domains lie at 918-1016 (APYD…CEEW) and 1023-1122 (PPHS…TRPG). Ser-1036 bears the Phosphoserine mark. 3 Ig-like C2-type domains span residues 1114–1212 (PVVA…EEMK), 1340–1426 (PHFA…LKLV), and 1555–1644 (RVLG…FTVS).

In terms of assembly, homodimer. Interacts with TTN/titin and PNKD. As to expression, ubiquitously expressed in all striated muscles. Expressed in all fiber types.

It is found in the cytoplasm. Its subcellular location is the myofibril. It localises to the sarcomere. The protein resides in the m line. In terms of biological role, may link the intermediate filament cytoskeleton to the M-disk of the myofibrils in striated muscle. May also contact myosin filaments. Also binds beta-integrins. This Mus musculus (Mouse) protein is Myomesin-1 (Myom1).